Consider the following 84-residue polypeptide: Small ribosomal subunit protein uS17 (84 aa).

It belongs to the universal ribosomal protein uS17 family. Part of the 30S ribosomal subunit.

Functionally, one of the primary rRNA binding proteins, it binds specifically to the 5'-end of 16S ribosomal RNA. This chain is Small ribosomal subunit protein uS17, found in Clostridium botulinum (strain Okra / Type B1).